Consider the following 475-residue polypeptide: Ankyrin repeat, SAM and basic leucine zipper domain-containing protein 1 (475 aa).

The tract at residues Met-1–Lys-38 is disordered. Phosphoserine occurs at positions 17, 18, and 20. ANK repeat units lie at residues Glu-45–Ser-74, Tyr-78–Phe-107, Asp-110–Val-144, Arg-148–Ile-177, Asn-181–Leu-210, and Asp-214–Gly-243. Residues Ser-272–Glu-334 form the SAM domain.

Interacts with DDX4, PIWIL1, RANBP9 and TDRD1.

The protein resides in the cytoplasm. Plays a central role during spermatogenesis by repressing transposable elements and preventing their mobilization, which is essential for the germline integrity. Acts via the piRNA metabolic process, which mediates the repression of transposable elements during meiosis by forming complexes composed of piRNAs and Piwi proteins and governs the methylation and subsequent repression of transposons. Its association with pi-bodies suggests a participation in the primary piRNAs metabolic process. Required prior to the pachytene stage to facilitate the production of multiple types of piRNAs, including those associated with repeats involved in the regulation of retrotransposons. May act by mediating protein-protein interactions during germ cell maturation. This Oryctolagus cuniculus (Rabbit) protein is Ankyrin repeat, SAM and basic leucine zipper domain-containing protein 1 (ASZ1).